Here is a 285-residue protein sequence, read N- to C-terminus: Ribosomal protein L11 methyltransferase (285 aa).

Threonine 131, glycine 154, aspartate 176, and asparagine 223 together coordinate S-adenosyl-L-methionine.

Belongs to the methyltransferase superfamily. PrmA family.

The protein localises to the cytoplasm. The catalysed reaction is L-lysyl-[protein] + 3 S-adenosyl-L-methionine = N(6),N(6),N(6)-trimethyl-L-lysyl-[protein] + 3 S-adenosyl-L-homocysteine + 3 H(+). Its function is as follows. Methylates ribosomal protein L11. This is Ribosomal protein L11 methyltransferase from Brucella melitensis biotype 2 (strain ATCC 23457).